The sequence spans 159 residues: Ribonuclease H (159 aa).

The 142-residue stretch at 4-145 folds into the RNase H type-1 domain; it reads THKQVNIYTD…CDKLARDAAE (142 aa). Residues Asp-13, Glu-51, Asp-73, and Asp-137 each contribute to the Mg(2+) site.

This sequence belongs to the RNase H family. As to quaternary structure, monomer. Requires Mg(2+) as cofactor.

It is found in the cytoplasm. It catalyses the reaction Endonucleolytic cleavage to 5'-phosphomonoester.. In terms of biological role, endonuclease that specifically degrades the RNA of RNA-DNA hybrids. This Shewanella denitrificans (strain OS217 / ATCC BAA-1090 / DSM 15013) protein is Ribonuclease H.